Here is a 210-residue protein sequence, read N- to C-terminus: MAQRIVVTGTDTGIGKTVFAAALTDLLGACYWKPVQAGLAEETDSHRVQRLADLADDRLVPEAYRLAAPASPHLAARLDGVSIDPLCLNPPDTGGRPLVIEGAGGVMVPLTADTLYLDVFARWQWPVVLCARTSLGTINHSLLSLAALRSRGIAVLGVAFIGDANADSEETICRLGAVKRLGRLPWLPELTARSLQHAVAAEFRRADFAP.

13 to 18 is an ATP binding site; the sequence is GIGKTV. Position 17 (Thr-17) interacts with Mg(2+). Lys-33 is a catalytic residue. Glu-101 contributes to the Mg(2+) binding site. Residues 101–104 and 185–187 contribute to the ATP site; these read EGAG and PWL.

It belongs to the dethiobiotin synthetase family. Homodimer. Requires Mg(2+) as cofactor.

The protein resides in the cytoplasm. It catalyses the reaction (7R,8S)-7,8-diammoniononanoate + CO2 + ATP = (4R,5S)-dethiobiotin + ADP + phosphate + 3 H(+). It participates in cofactor biosynthesis; biotin biosynthesis; biotin from 7,8-diaminononanoate: step 1/2. Its function is as follows. Catalyzes a mechanistically unusual reaction, the ATP-dependent insertion of CO2 between the N7 and N8 nitrogen atoms of 7,8-diaminopelargonic acid (DAPA, also called 7,8-diammoniononanoate) to form a ureido ring. The chain is ATP-dependent dethiobiotin synthetase BioD from Bradyrhizobium sp. (strain BTAi1 / ATCC BAA-1182).